Reading from the N-terminus, the 737-residue chain is Alpha-adducin (737 aa).

Methionine 1 is subject to N-acetylmethionine. Residues 1-21 are disordered; that stretch reads MNGDSRAAVVTSPPPTTAPHK. A Phosphoserine modification is found at serine 12. Residue serine 59 is modified to Phosphoserine; by PKA. At serine 64 the chain carries Phosphoserine. Position 331 is a phosphothreonine (threonine 331). Residues serine 334, serine 353, serine 355, serine 358, and serine 366 each carry the phosphoserine modification. The residue at position 408 (serine 408) is a Phosphoserine; by PKA. Disordered regions lie at residues 421–486 and 576–737; these read FASD…SAVP and RREV…KSDS. Serine 427 is modified (phosphoserine). Threonine 429 carries the post-translational modification Phosphothreonine. Phosphoserine is present on serine 431. A Phosphoserine; by PKA modification is found at serine 436. Threonine 445 is modified (phosphothreonine; by ROCK2). 2 positions are modified to phosphoserine: serine 464 and serine 465. Threonine 480 carries the post-translational modification Phosphothreonine; by ROCK2. Residue serine 481 is modified to Phosphoserine; by PKA. Positions 576–601 are enriched in basic and acidic residues; it reads RREVERKQKGSEENLDEAREQKEKSP. Phosphoserine is present on residues serine 586, serine 600, and serine 613. Residues 602–614 are compositionally biased toward pro residues; the sequence is PDQPAVPHPPPST. Threonine 614 bears the Phosphothreonine mark. A phosphoserine mark is found at serine 678, serine 707, serine 710, and serine 714. Residues 687–714 show a composition bias toward low complexity; it reads PVAEEAAPSAVEEGAAADPGSDGSPGKS. The segment covering 715–737 has biased composition (basic residues); that stretch reads PSKKKKKFRTPSFLKKSKKKSDS. Serine 716 carries the phosphoserine; by PKC modification. Residues 717-734 form an interaction with calmodulin region; sequence KKKKKFRTPSFLKKSKKK. Phosphoserine; by PKA and PKC is present on serine 726.

Belongs to the aldolase class II family. Adducin subfamily. Heterodimer of an alpha and a beta subunit or an alpha and a gamma subunit. Expressed in all tissues. Found in much higher levels in reticulocytes than the beta subunit.

It localises to the cytoplasm. Its subcellular location is the cytoskeleton. The protein localises to the cell membrane. Its function is as follows. Membrane-cytoskeleton-associated protein that promotes the assembly of the spectrin-actin network. Binds to calmodulin. The chain is Alpha-adducin (ADD1) from Homo sapiens (Human).